A 374-amino-acid chain; its full sequence is Alanine racemase (374 aa).

Residue lysine 35 is the Proton acceptor; specific for D-alanine of the active site. The residue at position 35 (lysine 35) is an N6-(pyridoxal phosphate)lysine. Arginine 130 contacts substrate. The active-site Proton acceptor; specific for L-alanine is the tyrosine 261. Residue methionine 309 coordinates substrate.

This sequence belongs to the alanine racemase family. Pyridoxal 5'-phosphate is required as a cofactor.

The catalysed reaction is L-alanine = D-alanine. Its pathway is amino-acid biosynthesis; D-alanine biosynthesis; D-alanine from L-alanine: step 1/1. In terms of biological role, catalyzes the interconversion of L-alanine and D-alanine. May also act on other amino acids. In Albidiferax ferrireducens (strain ATCC BAA-621 / DSM 15236 / T118) (Rhodoferax ferrireducens), this protein is Alanine racemase (alr).